A 1037-amino-acid chain; its full sequence is Exportin-T (1037 aa).

The protein belongs to the exportin family.

The protein localises to the nucleus. It localises to the cytoplasm. Its function is as follows. tRNA nucleus export receptor which facilitates tRNA translocation across the nuclear pore complex. Involved in pre-tRNA splicing, probably by affecting the interaction of pre-tRNA with splicing endonuclease. This is Exportin-T (los1) from Neosartorya fischeri (strain ATCC 1020 / DSM 3700 / CBS 544.65 / FGSC A1164 / JCM 1740 / NRRL 181 / WB 181) (Aspergillus fischerianus).